A 227-amino-acid chain; its full sequence is Ribose-5-phosphate isomerase A (227 aa).

Substrate-binding positions include 30–33, 86–89, and 99–102; these read TGST, DGAD, and KGMG. Catalysis depends on E108, which acts as the Proton acceptor. K126 contributes to the substrate binding site.

The protein belongs to the ribose 5-phosphate isomerase family. In terms of assembly, homodimer.

It carries out the reaction aldehydo-D-ribose 5-phosphate = D-ribulose 5-phosphate. It participates in carbohydrate degradation; pentose phosphate pathway; D-ribose 5-phosphate from D-ribulose 5-phosphate (non-oxidative stage): step 1/1. Catalyzes the reversible conversion of ribose-5-phosphate to ribulose 5-phosphate. In Thermus thermophilus (strain ATCC 27634 / DSM 579 / HB8), this protein is Ribose-5-phosphate isomerase A.